Consider the following 347-residue polypeptide: NADH-ubiquinone oxidoreductase chain 2 (347 aa).

11 consecutive transmembrane segments (helical) span residues 3 to 23 (PPIL…VLTS), 25 to 45 (HWLT…PILM), 59 to 79 (YLLT…IDLL), 96 to 116 (AMMT…FWVP), 122 to 142 (IHMS…LSIL), 149 to 169 (INPN…GWGG), 178 to 198 (ILAY…LYNP), 200 to 220 (MMIL…MLFM), 237 to 257 (APLI…LPPL), 274 to 294 (EMII…YFYM), and 325 to 345 (LLSP…LLSI).

Belongs to the complex I subunit 2 family. As to quaternary structure, core subunit of respiratory chain NADH dehydrogenase (Complex I) which is composed of 45 different subunits. Interacts with TMEM242.

The protein localises to the mitochondrion inner membrane. The catalysed reaction is a ubiquinone + NADH + 5 H(+)(in) = a ubiquinol + NAD(+) + 4 H(+)(out). Its function is as follows. Core subunit of the mitochondrial membrane respiratory chain NADH dehydrogenase (Complex I) which catalyzes electron transfer from NADH through the respiratory chain, using ubiquinone as an electron acceptor. Essential for the catalytic activity and assembly of complex I. The sequence is that of NADH-ubiquinone oxidoreductase chain 2 from Cynictis penicillata (Yellow mongoose).